We begin with the raw amino-acid sequence, 886 residues long: Vam6/Vps39-like protein (886 aa).

The CNH domain occupies 15-294 (PLQIDCLAAW…RFITSGGSNI (280 aa)). The stretch at 573–750 (FTEDLPEVES…LLRMYLSPPS (178 aa)) is one CHCR repeat.

Belongs to the VAM6/VPS39 family. As to quaternary structure, homooligomer. Interacts with TGFBR2 and, less efficiently, with TGFBR1; interaction with TGFBR2 is independent of the receptor kinase activity and of the presence of TGF-beta. Also interacts with ACVR2B, but not with BMPR2. Interacts with SMAD4, preferentially following TGF-beta treatment. Does not interact with SAMD2 or SMAD3. Component of the homotypic fusion and vacuole protein sorting (HOPS) complex; the core of which composed of the class C Vps proteins VPS11, VPS16, VPS18 and VPS33A, is associated with VPS39 and VPS41. Interacts with PLEKHM2; involved in VPS39 recruitment to ARL8B-containing lysosomes. Associates with adapter protein complex 3 (AP-3) and clathrin:AP-3 complexes. Interacts with STX17; this interaction is increased in the absence of TMEM39A. Interacts with RAB7, RAB2A and RAB2B. Interacts with RAB2A (GTP-bound); the interaction contributes to obtaining a functional HOPS complex that promotes autophagosome-lysosome membrane fusion driven by STX17-SNAP29-VAMP8. Interacts with RAB39A (GTP-bound) and RAB39B (GTP-bound); interaction with RAB39A contributes to obtaining a functional HOPS complex. (Microbial infection) Interacts with SARS coronavirus-2/SARS-CoV-2 ORF3A protein; the interaction is direct and sequestrates VPS39, thereby preventing HOPS complex from interacting with the autophagosomal SNARE protein STX17. ORF3A enhances the interaction of VPS39 with VPS11 and VPS18, while its interaction with the VPS16:VPS33A module is attenuated. As to expression, widely expressed, with highest levels in heart, skeletal muscle, kidney, pancreas, brain, placenta and spleen.

It is found in the cytoplasm. The protein resides in the lysosome membrane. It localises to the late endosome membrane. Its function is as follows. Regulator of TGF-beta/activin signaling, inhibiting SMAD3- and activating SMAD2-dependent transcription. Acts by interfering with SMAD3/SMAD4 complex formation, this would lead to inhibition of SMAD3-dependent transcription and relieve SMAD3 inhibition of SMAD2-dependent promoters, thus increasing SMAD2-dependent transcription. Does not affect TGF-beta-induced SMAD2 or SMAD3 phosphorylation, nor SMAD2/SMAD4 complex formation. Plays a role in vesicle-mediated protein trafficking to lysosomal compartments including the endocytic membrane transport and autophagic pathways. Acts as a component of the HOPS endosomal tethering complex. This complex is proposed to be involved in the Rab5-to-Rab7 endosome conversion probably implicating MON1A/B, and via binding SNAREs and SNARE complexes to mediate tethering and docking events during SNARE-mediated membrane fusion. The HOPS complex is proposed to be recruited to Rab7 on the late endosomal membrane and to regulate late endocytic, phagocytic and autophagic traffic towards lysosomes. Involved in homotypic vesicle fusions between late endosomes and in heterotypic fusions between late endosomes and lysosomes. Required for fusion of endosomes and autophagosomes with lysosomes. The sequence is that of Vam6/Vps39-like protein from Homo sapiens (Human).